A 397-amino-acid polypeptide reads, in one-letter code: 2,6-dihydroxypyridine 3-monooxygenase (397 aa).

Residues 14 to 16 (SIS), 35 to 36 (ER), valine 49, leucine 120, aspartate 306, and 316 to 320 (AAGGA) each bind FAD.

Homodimer. FAD is required as a cofactor.

The enzyme catalyses 2,6-dihydroxypyridine + NADH + O2 + H(+) = 2,3,6-trihydroxypyridine + NAD(+) + H2O. It functions in the pathway alkaloid degradation; nicotine degradation. Functionally, catalyzes the conversion of 2,6-dihydroxypyridine into 2,3,6-trihydroxypyridine in the nicotine degradation pathway. This Paenarthrobacter nicotinovorans (Arthrobacter nicotinovorans) protein is 2,6-dihydroxypyridine 3-monooxygenase (dhpH).